The following is a 414-amino-acid chain: Methyltransferase-like protein 2 (414 aa).

The tract at residues 56–77 (LNQHSSESNPKKRKRKQKNSSF) is disordered.

Belongs to the MT-A70-like family.

Probable methyltransferase. The protein is Methyltransferase-like protein 2 of Arabidopsis thaliana (Mouse-ear cress).